Here is a 156-residue protein sequence, read N- to C-terminus: MKVELDSFSGTKIYPGRGTLFVRGDSKIFRFQSSKSASLFHQRKNPRRISWTVLYRRQHKKGISEESAKRRTRKTVKNQRAIVGASLELIKERRSQKPSDRKAARDVKLAKDKEAKKADKAARKAEKAKSAAAGAQSKVSKQQSKGAFQKVHATSR.

A disordered region spans residues 87–156; it reads LELIKERRSQ…AFQKVHATSR (70 aa). The span at 89-129 shows a compositional bias: basic and acidic residues; sequence LIKERRSQKPSDRKAARDVKLAKDKEAKKADKAARKAEKAK. Low complexity predominate over residues 130–147; it reads SAAAGAQSKVSKQQSKGA.

This sequence belongs to the eukaryotic ribosomal protein eL24 family.

The protein is Large ribosomal subunit protein eL24 (RPL24) of Debaryomyces hansenii (strain ATCC 36239 / CBS 767 / BCRC 21394 / JCM 1990 / NBRC 0083 / IGC 2968) (Yeast).